A 233-amino-acid polypeptide reads, in one-letter code: uncharacterized protein (233 aa).

N-linked (GlcNAc...) asparagine; by host glycosylation is found at Asn58, Asn77, Asn93, Asn102, Asn110, Asn120, and Asn155. Residues Asn102–Ser124 are compositionally biased toward low complexity. The disordered stretch occupies residues Asn102–Asp132. A helical transmembrane segment spans residues Phe168–Trp188.

The protein belongs to the ascovirus HvAv ORF58 family.

The protein localises to the membrane. This is an uncharacterized protein from Trichoplusia ni ascovirus 2c (TnAV-2c).